We begin with the raw amino-acid sequence, 310 residues long: O-acetylserine sulfhydrylase (310 aa).

An N6-(pyridoxal phosphate)lysine modification is found at Lys44. Residues Asn74, Gly178 to Thr182, and Ser266 contribute to the pyridoxal 5'-phosphate site.

It belongs to the cysteine synthase/cystathionine beta-synthase family. In terms of assembly, homodimer. Pyridoxal 5'-phosphate serves as cofactor.

It carries out the reaction O-acetyl-L-serine + hydrogen sulfide = L-cysteine + acetate. It participates in amino-acid biosynthesis; L-cysteine biosynthesis; L-cysteine from L-serine: step 2/2. Functionally, catalyzes the conversion of O-acetylserine (OAS) to cysteine through the elimination of acetate and addition of hydrogen sulfide. The protein is O-acetylserine sulfhydrylase (cysK) of Mycobacterium bovis (strain ATCC BAA-935 / AF2122/97).